The chain runs to 63 residues: Cecropin-A2 (63 aa).

The N-terminal stretch at 1 to 23 is a signal peptide; the sequence is MNFYNIFVFVALILAITIGQSEA. The residue at position 62 (arginine 62) is an Arginine amide.

It belongs to the cecropin family. In terms of tissue distribution, strongly expressed in larval, pupal and adult fat body and hemocytes after injection of bacteria. Maximal expression in the adult involves fat body cells of the head, thorax and abdomen.

Its subcellular location is the secreted. In terms of biological role, cecropins have lytic and antibacterial activity against several Gram-positive and Gram-negative bacteria. The protein is Cecropin-A2 of Drosophila melanogaster (Fruit fly).